We begin with the raw amino-acid sequence, 295 residues long: MTSTINRPLDGEGSVQVKQDPKINIEEGALVIAVYGKGGIGKSTTSSNLSAAFSKLGKKVLQIGCDPKHDSTFTLTHKMVPTVIDILEEVDFHSEELRPTDFMFEGFNGVMCVESGGPPAGTGCGGYVTGQTVKLLKEHHLLEDTDVVIFDVLGDVVCGGFAAPLQHANYCLIVTANDFDSIFAMNRIVSAIKAKAKNYKVRLGGVVANRSKDTDQIDKFNERTGLKTMAHFKDVDAIRRSRLKKCTIFEMEPTEDVIEVQNEYLSLAKNMLENVEPLEGNPLKDREIFDLLGFD.

Residues 39–44 and lysine 68 each bind ATP; that span reads GIGKST. Serine 43 contacts Mg(2+). The [4Fe-4S] cluster site is built by cysteine 124 and cysteine 158. 209–210 serves as a coordination point for ATP; it reads NR.

The protein belongs to the NifH/BchL/ChlL family. Homodimer. Protochlorophyllide reductase is composed of three subunits; ChlL, ChlN and ChlB. [4Fe-4S] cluster serves as cofactor.

The catalysed reaction is chlorophyllide a + oxidized 2[4Fe-4S]-[ferredoxin] + 2 ADP + 2 phosphate = protochlorophyllide a + reduced 2[4Fe-4S]-[ferredoxin] + 2 ATP + 2 H2O. The protein operates within porphyrin-containing compound metabolism; chlorophyll biosynthesis (light-independent). In terms of biological role, component of the dark-operative protochlorophyllide reductase (DPOR) that uses Mg-ATP and reduced ferredoxin to reduce ring D of protochlorophyllide (Pchlide) to form chlorophyllide a (Chlide). This reaction is light-independent. The L component serves as a unique electron donor to the NB-component of the complex, and binds Mg-ATP. This chain is Light-independent protochlorophyllide reductase iron-sulfur ATP-binding protein, found in Prochlorococcus marinus (strain AS9601).